We begin with the raw amino-acid sequence, 422 residues long: uncharacterized protein (422 aa).

Residues methionine 1–alanine 23 form the signal peptide.

In terms of tissue distribution, component of the acid-insoluble organic matrix of the aragonitic skeleton (at protein level).

It is found in the secreted. This is an uncharacterized protein from Acropora millepora (Staghorn coral).